A 1583-amino-acid polypeptide reads, in one-letter code: Transcriptional activator GLI3 (1583 aa).

Residue Met1 is modified to N-acetylmethionine. Composition is skewed to polar residues over residues 1-10 (MEAQAHSSTA) and 58-78 (ITMQPQSVQGLNKISEEPSTS). Positions 1–78 (MEAQAHSSTA…NKISEEPSTS (78 aa)) are disordered. An Omega-N-methylarginine modification is found at Arg175. The tract at residues 368–475 (QSLGSAFGHS…DKDESKQEPE (108 aa)) is disordered. Positions 403-421 (VQVSSGPSESSQSKPTSES) are enriched in low complexity. Lys438 participates in a covalent cross-link: Glycyl lysine isopeptide (Lys-Gly) (interchain with G-Cter in SUMO2). A compositionally biased stretch (polar residues) spans 448 to 457 (SRGQQEQPEG). The segment covering 461 to 474 (VKEEADKDESKQEP) has biased composition (basic and acidic residues). Lys462 is covalently cross-linked (Glycyl lysine isopeptide (Lys-Gly) (interchain with G-Cter in SUMO2)). 5 C2H2-type zinc fingers span residues 480 to 505 (TNCHWEGCTREFDTQDQLVHHINNDH), 513 to 540 (FVCRWLDCSREQKPFKAQYMLVVHMRRH), 546 to 570 (HKCTFEGCTKAYSRLENLKTHLRSH), 576 to 601 (YVCEHEGCNKAFSNASDRAKHQNRTH), and 607 to 632 (YVCKIPGCTKRYTDPSSLRKHVKTVH). A disordered region spans residues 620–728 (DPSSLRKHVK…PISNYSNSGL (109 aa)). Basic and acidic residues predominate over residues 632 to 648 (HGPEAHVTKKQRGDMHP). Ser664 carries the phosphoserine modification. Basic and acidic residues predominate over residues 684 to 699 (SKREECLQVKTVKAEK). Over residues 703–726 (SQPSPGGQSSCSSQQSPISNYSNS) the composition is skewed to low complexity. The interval 745–845 (DETPIMDSTI…VDFTVLNTLN (101 aa)) is mediates interaction with DZIP1. Residue Lys773 forms a Glycyl lysine isopeptide (Lys-Gly) (interchain with G-Cter in ubiquitin) linkage. Lys779 is covalently cross-linked (Glycyl lysine isopeptide (Lys-Gly) (interchain with G-Cter in SUMO2); alternate). A Glycyl lysine isopeptide (Lys-Gly) (interchain with G-Cter in ubiquitin); alternate cross-link involves residue Lys779. Residues Lys784 and Lys800 each participate in a glycyl lysine isopeptide (Lys-Gly) (interchain with G-Cter in ubiquitin) cross-link. A disordered region spans residues 809-828 (GNGTQSNNNYSSGGPGTLLP). Polar residues predominate over residues 810 to 820 (NGTQSNNNYSS). 6 positions are modified to phosphoserine; by PKA: Ser849, Ser865, Ser877, Ser907, Ser980, and Ser1006. Residues 863–880 (RSSGISPCFSSRRSSEAS) show a composition bias toward low complexity. Residues 863–918 (RSSGISPCFSSRRSSEASQAEGRPQNVSVADSYDPISTDASRRSSEASQGDGLPSL) are disordered. The interval 1164 to 1189 (EVSSGTSDLSSSKLKCGQQRPSAQQP) is disordered. A compositionally biased stretch (low complexity) spans 1166–1175 (SSGTSDLSSS).

It belongs to the GLI C2H2-type zinc-finger protein family. In terms of assembly, the phosphorylated form interacts with BTRC. The full-length GLI3 form (GLI3FL) interacts with SUFU and this interaction regulates the formation of either repressor or activator forms of GLI3. Its association with SUFU is regulated by Hh signaling and dissociation of the SUFU-GLI3 interaction requires the presence of the ciliary motor KIF3A. Interacts with KIF7. The activator form of GLI3 (GLI3A) but not the repressor form (GLI3R) can interact with TRPS1. Interacts with ZIC1. Interacts with ZIC3 (via C2H2-type domains 3, 4 and 5); the interaction enhances its transcriptional activity. Interacts with WRD11; the interaction associates EMX1 with GLI3. Interacts with DZIP1; retains GLI3 within the cytoplasm. Post-translationally, phosphorylated by DYRK2 (in vitro). Phosphorylated on multiple sites by protein kinase A (PKA) and phosphorylation by PKA primes further phosphorylation by CK1 and GSK3. Phosphorylation is essential for its proteolytic processing. In terms of processing, transcriptional repressor GLI3R, a C-terminally truncated form, is generated from the full-length GLI3 protein (GLI3FL/GLI3-190) through proteolytic processing. This process requires PKA-primed phosphorylation of GLI3, ubiquitination of GLI3 and the presence of BTRC. GLI3FL is complexed with SUFU in the cytoplasm and is maintained in a neutral state. Without the Hh signal, the SUFU-GLI3 complex is recruited to cilia, leading to the efficient processing of GLI3FL into GLI3R. GLI3R formation leads to its dissociation from SUFU, allowing it to translocate into the nucleus, and repress Hh target genes. When Hh signaling is initiated, SUFU dissociates from GLI3FL and this has two consequences. First, GLI3R production is halted. Second, free GLI3FL translocates to the nucleus, where it is phosphorylated, destabilized, and converted to a transcriptional activator (GLI3A). Phosphorylated in vitro by ULK3.

The protein resides in the nucleus. It localises to the cytoplasm. It is found in the cell projection. Its subcellular location is the cilium. Functionally, has a dual function as a transcriptional activator and a repressor of the sonic hedgehog (Shh) pathway, and plays a role in limb development. The full-length GLI3 form (GLI3FL) after phosphorylation and nuclear translocation, acts as an activator (GLI3A) while GLI3R, its C-terminally truncated form, acts as a repressor. A proper balance between the GLI3 activator and the repressor GLI3R, rather than the repressor gradient itself or the activator/repressor ratio gradient, specifies limb digit number and identity. In concert with TRPS1, plays a role in regulating the size of the zone of distal chondrocytes, in restricting the zone of PTHLH expression in distal cells and in activating chondrocyte proliferation. Binds to the minimal GLI-consensus sequence 5'-GGGTGGTC-3'. This chain is Transcriptional activator GLI3 (Gli3), found in Mus musculus (Mouse).